We begin with the raw amino-acid sequence, 231 residues long: Ion-translocating oxidoreductase complex subunit E (231 aa).

The next 6 helical transmembrane spans lie at 18 to 38 (ALVQLLGLCPLLAVTSTATNA), 39 to 59 (LGLGLATTLVLTLTNLTISTL), 63 to 83 (TPAEIRIPIYVMIIASVVSAV), 86 to 106 (LINAYAFGLYQSLGIFIPLIV), 125 to 145 (ALSALDGFSIGMGATCAMFVL), and 182 to 202 (PFLLAMLPPGAFIGLGLMLAG).

It belongs to the NqrDE/RnfAE family. As to quaternary structure, the complex is composed of six subunits: RsxA, RsxB, RsxC, RsxD, RsxE and RsxG.

It is found in the cell inner membrane. Functionally, part of a membrane-bound complex that couples electron transfer with translocation of ions across the membrane. Required to maintain the reduced state of SoxR. The polypeptide is Ion-translocating oxidoreductase complex subunit E (Shigella boydii serotype 18 (strain CDC 3083-94 / BS512)).